The chain runs to 378 residues: Putative odorant receptor 71a (378 aa).

The Cytoplasmic portion of the chain corresponds to 1 to 37 (MDYDRIRPVRFLTGVLKWWRLWPRKESVSTPDWTNWQ). Residues 38-58 (AYALHVPFTFLFVLLLWLEAI) traverse the membrane as a helical segment. Residues 59–66 (KSRDIQHT) lie on the Extracellular side of the membrane. The helical transmembrane segment at 67–87 (ADVLLICLTTTALGGKVINIW) threads the bilayer. The Cytoplasmic segment spans residues 88–127 (KYAHVAQGILSEWSTWDLFELRSKQEVDMWRFEHRRFNRV). The chain crosses the membrane as a helical span at residues 128 to 148 (FMFYCLCSAGVIPFIVIQPLF). Topologically, residues 149–166 (DIPNRLPFWMWTPFDWQQ) are extracellular. A helical transmembrane segment spans residues 167 to 187 (PVLFWYAFIYQATTIPIACAC). Residues 188-255 (NVTMDAVNWY…IFISKSTFTQ (68 aa)) lie on the Cytoplasmic side of the membrane. Residues 256–276 (ILVSSLIICFTIYSMQMSPVL) form a helical membrane-spanning segment. The Extracellular portion of the chain corresponds to 277 to 280 (QDLP). Residues 281–301 (GFAAMMQYLVAMIMQVMLPTI) form a helical membrane-spanning segment. Residues 302–343 (YGNAVIDSANMLTDSMYNSDWPDMNCRMRRLVLMFMVYLNRP) lie on the Cytoplasmic side of the membrane. Residues 344-364 (VTLKAGGFFHIGLPLFTKTMN) traverse the membrane as a helical segment. Residues 365-378 (QAYSLLALLLNMNQ) lie on the Extracellular side of the membrane.

Belongs to the insect chemoreceptor superfamily. Heteromeric odorant receptor channel (TC 1.A.69) family. Or2a subfamily. In terms of assembly, interacts with Orco. Complexes exist early in the endomembrane system in olfactory sensory neurons (OSNs), coupling these complexes to the conserved ciliary trafficking pathway. Expressed in olfactory sensory neurons in the maxillary palp.

It is found in the cell membrane. Odorant receptor which mediates acceptance or avoidance behavior, depending on its substrates. The odorant receptor repertoire encodes a large collection of odor stimuli that vary widely in identity, intensity, and duration. May form a complex with Orco to form odorant-sensing units, providing sensitive and prolonged odorant signaling and calcium permeability. The chain is Putative odorant receptor 71a (Or71a) from Drosophila melanogaster (Fruit fly).